A 175-amino-acid polypeptide reads, in one-letter code: Translation initiation factor IF-3 (175 aa).

This sequence belongs to the IF-3 family. In terms of assembly, monomer.

The protein localises to the cytoplasm. Functionally, IF-3 binds to the 30S ribosomal subunit and shifts the equilibrium between 70S ribosomes and their 50S and 30S subunits in favor of the free subunits, thus enhancing the availability of 30S subunits on which protein synthesis initiation begins. The sequence is that of Translation initiation factor IF-3 from Chlamydia trachomatis serovar D (strain ATCC VR-885 / DSM 19411 / UW-3/Cx).